We begin with the raw amino-acid sequence, 306 residues long: MTDSKYDYSDITPVDINTEEPQICQILYDEDYKQIMGLLLALMKAEEYSERALHITELGINELASHYTIWIYRFNILKNLPNRNLYDELDWCEEIALDNEKNYQIWNYRQLIIGQIMELNNNDFDPYREFPILEAMLSSDPKNHHVWSYRKWLVDTFDLHNDAKELSFVDKVIDTDLKNNSAWSHRFFLLFSKKHLATDNTIDEELNYVKDKIVKCPQNPSTWNYLLGIHERFDRSITQLEEFSLQFVDLEKDQVTSSFALETLAKIYTQQKKYNESRTVYDLLKSKYDPIRSNFWDYQISKLTSV.

PFTA repeat units lie at residues 48–82 (YSERALHITELGINELASHYTIWIYRFNILKNLPN), 84–118 (NLYDELDWCEEIALDNEKNYQIWNYRQLIIGQIME), 125–159 (DPYREFPILEAMLSSDPKNHHVWSYRKWLVDTFDL), 161–195 (NDAKELSFVDKVIDTDLKNNSAWSHRFFLLFSKKH), and 201–235 (TIDEELNYVKDKIVKCPQNPSTWNYLLGIHERFDR).

It belongs to the protein prenyltransferase subunit alpha family. Heterodimer of an alpha and a beta subunit. Mg(2+) is required as a cofactor.

It carries out the reaction L-cysteinyl-[protein] + (2E,6E)-farnesyl diphosphate = S-(2E,6E)-farnesyl-L-cysteinyl-[protein] + diphosphate. It catalyses the reaction geranylgeranyl diphosphate + L-cysteinyl-[protein] = S-geranylgeranyl-L-cysteinyl-[protein] + diphosphate. In terms of biological role, essential subunit of both the farnesyltransferase and the geranylgeranyltransferase complex. Contributes to the transfer of a farnesyl or geranylgeranyl moiety from farnesyl or geranylgeranyl diphosphate to a cysteine at the fourth position from the C-terminus of several proteins having the C-terminal sequence Cys-aliphatic-aliphatic-X. This Candida albicans (Yeast) protein is Protein farnesyltransferase/geranylgeranyltransferase type-1 subunit alpha (RAM2).